A 30-amino-acid polypeptide reads, in one-letter code: Basic phospholipase A2 CM-I (30 aa).

It belongs to the phospholipase A2 family. Group I subfamily. Requires Ca(2+) as cofactor. In terms of tissue distribution, expressed by the venom gland.

The protein resides in the secreted. The enzyme catalyses a 1,2-diacyl-sn-glycero-3-phosphocholine + H2O = a 1-acyl-sn-glycero-3-phosphocholine + a fatty acid + H(+). In terms of biological role, snake venom phospholipase A2 (PLA2) that shows weak anticoagulant activity. Is more catalytically active than the strong anticoagulant protein CM-IV found in this venom. Acts by inhibiting the complex composed of tissue factor (F3) and coagulation factor VIIa (F7) (TF-VIIa complex) by only enzymatic mechanism. PLA2 catalyzes the calcium-dependent hydrolysis of the 2-acyl groups in 3-sn-phosphoglycerides. The chain is Basic phospholipase A2 CM-I from Naja nigricollis (Black-necked spitting cobra).